The following is a 178-amino-acid chain: uncharacterized protein (178 aa).

The next 4 helical transmembrane spans lie at 29–49 (AATGFCGGVLWSFVAYIAYLF), 76–96 (VISIILIGVISIGAAFLYFLL), 105–125 (PGILYGLVLWLLVFFVFNPIF), and 139–159 (IITTICIYLLYGLFVGYSISF).

It is found in the cell membrane. This is an uncharacterized protein from Bacillus subtilis (strain 168).